Reading from the N-terminus, the 505-residue chain is Actin nucleation-promoting factor WASL (505 aa).

Residue S2 is modified to N-acetylserine. In terms of domain architecture, WH1 spans 34–141 (LGKKCVTMSS…KAVTDLLGRR (108 aa)). Disordered stretches follow at residues 138 to 163 (LGRR…ATVD) and 184 to 205 (HTKE…DIGT). The span at 186–198 (KEKKKGKAKKKRL) shows a compositional bias: basic residues. The CRIB domain occupies 203 to 216 (IGTPSNFQHIGHVG). S242 is subject to Phosphoserine; by TNK2. Y256 is modified (phosphotyrosine; by FAK1 and TNK2). The tract at residues 266 to 406 (EAVKNELRRQ…HQVPTTAGNK (141 aa)) is disordered. Composition is skewed to pro residues over residues 276–364 (APPP…PPPS) and 371–391 (VAPP…PPGL). R307 is modified (omega-N-methylarginine). WH2 domains lie at 405–422 (NKAA…LKKV) and 433–450 (GRDA…LKSV). The segment at 476-505 (QKRSKAIHSSDEDEDEDDEEDFEDDDEWED) is disordered. Phosphoserine is present on residues S484 and S485. Residues 486–505 (DEDEDEDDEEDFEDDDEWED) show a composition bias toward acidic residues.

As to quaternary structure, binds actin and the Arp2/3 complex. Interacts with CDC42. Interacts with FCHSD1. Interacts with FCHSD2. Binds to SH3 domains of GRB2. Interacts with the C-terminal SH3 domain of DNMBP. Interacts with SNX9. Interacts with the WW domains of PRPF40A/FBP11. Interacts with PTK2/FAK1. Interacts with PACSIN1, PACSIN2 and PACSIN3. Interacts with NOSTRIN. Binds to TNK2. Interacts with SNX33. Interacts with NONO (via second RRM domain); the interaction is direct. Component of a multiprotein complex with NONO and SFPQ; associates with the complex via direct interaction with NONO. (Microbial infection) Interacts with E.coli effector protein EspF(U). Identified in a complex containing at least WASL, BAIAP2L1 and E.coli EspF(U). In terms of assembly, (Microbial infection) Interacts with Shigella flexneri protein IcsA. The interaction with IcsA enhances the affinity of WASL for Arp2/3, thus assembling a tight complex which has maximal activity in actin assembly. In terms of processing, phosphorylation at Ser-242, Tyr-256, Ser-484 and Ser-485 enhances actin polymerization activity.

Its subcellular location is the cytoplasm. It is found in the cytoskeleton. The protein resides in the nucleus. Its function is as follows. Regulates actin polymerization by stimulating the actin-nucleating activity of the Arp2/3 complex. Involved in various processes, such as mitosis and cytokinesis, via its role in the regulation of actin polymerization. Together with CDC42, involved in the extension and maintenance of the formation of thin, actin-rich surface projections called filopodia. In addition to its role in the cytoplasm, also plays a role in the nucleus by regulating gene transcription, probably by promoting nuclear actin polymerization. Binds to HSF1/HSTF1 and forms a complex on heat shock promoter elements (HSE) that negatively regulates HSP90 expression. Plays a role in dendrite spine morphogenesis. Decreasing levels of DNMBP (using antisense RNA) alters apical junction morphology in cultured enterocytes, junctions curve instead of being nearly linear. This Homo sapiens (Human) protein is Actin nucleation-promoting factor WASL (WASL).